A 783-amino-acid chain; its full sequence is LPS-assembly protein LptD (783 aa).

The first 24 residues, 1 to 24 (MSCFSRTFLAASISAALFAPQIQA), serve as a signal peptide directing secretion.

Belongs to the LptD family. In terms of assembly, component of the lipopolysaccharide transport and assembly complex. Interacts with LptE and LptA.

It is found in the cell outer membrane. In terms of biological role, together with LptE, is involved in the assembly of lipopolysaccharide (LPS) at the surface of the outer membrane. The protein is LPS-assembly protein LptD of Vibrio cholerae serotype O1 (strain ATCC 39315 / El Tor Inaba N16961).